We begin with the raw amino-acid sequence, 227 residues long: Protein FAM3C (227 aa).

An N-terminal signal peptide occupies residues 1–24; it reads MRVAGAAKLVVAVAVFLLTFYVIS. Intrachain disulfides connect Cys58–Cys86 and Cys64–Cys221. The GG-type lectin domain maps to 67–225; sequence KHFAFKMASG…VEMEGCIPQK (159 aa).

The protein belongs to the FAM3 family. In terms of tissue distribution, present in most secretory epithelia (at protein level).

It is found in the secreted. The protein localises to the cytoplasmic vesicle. In terms of biological role, may be involved in retinal laminar formation. Promotes epithelial to mesenchymal transition. In Homo sapiens (Human), this protein is Protein FAM3C (FAM3C).